We begin with the raw amino-acid sequence, 266 residues long: Tropinone reductase homolog At1g07440 (266 aa).

An NADP(+)-binding site is contributed by 18-42; it reads LVTGGTKGIGHAIVEEFAGFGAVIH. Ser151 is a substrate binding site. The active-site Proton acceptor is Tyr164.

It belongs to the short-chain dehydrogenases/reductases (SDR) family. SDR65C subfamily.

The protein is Tropinone reductase homolog At1g07440 of Arabidopsis thaliana (Mouse-ear cress).